Consider the following 1477-residue polypeptide: FHA domain-containing protein PS1 (1477 aa).

The FHA domain occupies L64 to I115. 7 disordered regions span residues E188–T218, L588–F644, P789–F818, L832–S911, A942–V979, I1004–L1030, and V1159–S1225. Residues G589–Q607 show a composition bias toward basic and acidic residues. A compositionally biased stretch (polar residues) spans L832–P849. Residues Q870–E883 show a composition bias toward low complexity. Composition is skewed to polar residues over residues N885–I897, L957–E971, N1007–R1018, and S1198–A1212. The segment covering S1213 to S1225 has biased composition (low complexity).

Its function is as follows. Required for normal spindle orientation at male meiosis II and normal formation of tetrad of microspores. Not involved in female meiosis. This Arabidopsis thaliana (Mouse-ear cress) protein is FHA domain-containing protein PS1.